The following is a 166-amino-acid chain: Dynein regulatory complex protein 8 (166 aa).

The region spanning 95–130 is the EF-hand domain; it reads DDYHTLLRAFRAFDPDGRGFIDAESFKSLLTGKGEA.

It belongs to the DRC8 family. As to quaternary structure, component of the nexin-dynein regulatory complex (N-DRC).

Its subcellular location is the cytoplasm. It localises to the cytoskeleton. The protein resides in the flagellum axoneme. Functionally, component of the nexin-dynein regulatory complex (N-DRC), a key regulator of ciliary/flagellar motility which maintains the alignment and integrity of the distal axoneme and regulates microtubule sliding in motile axonemes. This Chlamydomonas reinhardtii (Chlamydomonas smithii) protein is Dynein regulatory complex protein 8.